Reading from the N-terminus, the 346-residue chain is Archaeosine synthase subunit beta (346 aa).

Positions 36–276 (GVQTKTLTVI…LRQAKAAHPE (241 aa)) constitute a Radical SAM core domain. The [4Fe-4S] cluster site is built by C51, C59, and C62.

Belongs to the radical SAM superfamily. RaSEA family. As to quaternary structure, forms a robust complex with the archaeosine synthase alpha subunit ArcS. This complex likely consists of an alpha(2)beta(2) heterotetrameric structure. [4Fe-4S] cluster serves as cofactor.

The enzyme catalyses 7-N-[(5S)-5-amino-5-carboxypentyl]formamidino-7-deazaguanosine(15) in tRNA + S-adenosyl-L-methionine = archaeosine(15) in tRNA + L-1-piperideine-6-carboxylate + 5'-deoxyadenosine + L-methionine + 2 H(+). Its pathway is tRNA modification; archaeosine-tRNA biosynthesis. In terms of biological role, radical SAM enzyme involved in the synthesis of archaeosine, a modified nucleoside present in the dihydrouridine loop (D-loop) of archaeal tRNAs. Catalyzes the cleavage of the C(epsilon)-N bond of the lysine moiety of q0kN15-tRNA, leading to the formation of archaeosine at position 15 in tRNAs. The chain is Archaeosine synthase subunit beta from Methanosarcina acetivorans (strain ATCC 35395 / DSM 2834 / JCM 12185 / C2A).